A 222-amino-acid polypeptide reads, in one-letter code: MPSLHIFYGGTFDPVHVGHLAIARAAHAALQAPIALIPSADPPHRPTPGSSSMDRLRMLQLAVSKEPGLSADPRELRRAARQNRPSYTVDTLTEVRSELGPKTSIIWLLGADAFVNLSNWKDWQMLPELTHLVVANRPGITLQTQLPPKMATVFNHRWVQDPATLRKTPHGHLWLLNQHPNPSSASKVRAAISAAAHWEADLTPEVAQYIRTHGLYGIHDIN.

The protein belongs to the NadD family.

The catalysed reaction is nicotinate beta-D-ribonucleotide + ATP + H(+) = deamido-NAD(+) + diphosphate. It participates in cofactor biosynthesis; NAD(+) biosynthesis; deamido-NAD(+) from nicotinate D-ribonucleotide: step 1/1. Functionally, catalyzes the reversible adenylation of nicotinate mononucleotide (NaMN) to nicotinic acid adenine dinucleotide (NaAD). In Xylella fastidiosa (strain M12), this protein is Probable nicotinate-nucleotide adenylyltransferase.